The primary structure comprises 136 residues: Small ribosomal subunit protein uS9 (136 aa).

It belongs to the universal ribosomal protein uS9 family.

This Synechococcus sp. (strain JA-2-3B'a(2-13)) (Cyanobacteria bacterium Yellowstone B-Prime) protein is Small ribosomal subunit protein uS9.